The primary structure comprises 582 residues: MAEFLDDQETRLCDNCKKEIPVFNFTIHEIHCQRNIGMCPTCKEPFPKSDMETHMAAEHCQVTCKCNKKLEKRLLKKHEETECPLRLAVCQHCDLELSILKLKEHEDYCGARTELCGNCGRNVLVKDLKTHPEVCGREGEEKRNEVAIPPNAYDESWGQDGIWIASQLLRQIEALDPPMRLPRRPLRAFESDVFHNRTTNQRNITAQVSIQNNLFEEQERQERNRGQQPPKEGGEESANLDFMLALSLQNEGQASSVAEQDFWRAVCEADQSHGGPRSLSDIKGAADEIMLPCEFCEELYPEELLIDHQTSCNPSRALPSLNTGSSSPRGVEEPDVIFQNFLQQAASNQLDSLMGLSNSHPVEESIIIPCEFCGVQLEEEVLFHHQDQCDQRPATATNHVTEGIPRLDSQPQETSPELPRRRVRHQGDLSSGYLDDTKQETANGPTSCLPPSRPINNMTATYNQLSRSTSGPRPGCQPSSPCVPKLSNSDSQDIQGRNRDSQNGAIAPGHVSVIRPPQNLYPENIVPSFSPGPSGRYGASGRSEGGRNSRVTPAAANYRSRTAKAKPSKQQGAGDAEEEEEE.

Ala-2 carries the post-translational modification N-acetylalanine. A TRAF-type zinc finger spans residues Ile-27–Lys-103. At Ser-191 the chain carries Phosphoserine. Residues Glu-217–Glu-236 are disordered. Phosphoserine is present on residues Ser-278, Ser-320, Ser-326, Ser-327, Ser-409, Ser-415, Ser-430, and Ser-470. Residues Thr-401–Glu-582 form a disordered region. 2 stretches are compositionally biased toward polar residues: residues Pro-454 to Gly-471 and Leu-486 to Gln-495.

As to quaternary structure, interacts with MAVS, TICAM1, TRAF1, TRAF2, TRAF3. Interacts with TRAF6.

Functionally, negative feedback regulator that controls excessive innate immune responses. Regulates both Toll-like receptor 4 (TLR4) and DDX58/RIG1-like helicases (RLH) pathways. May inhibit the LTR pathway by direct interaction with TRAF6 and attenuation of NF-kappa-B activation. May negatively regulate the RLH pathway downstream from MAVS and upstream of NF-kappa-B and IRF3. In Homo sapiens (Human), this protein is TRAF-type zinc finger domain-containing protein 1 (TRAFD1).